A 281-amino-acid chain; its full sequence is Aliphatic sulfonates import ATP-binding protein SsuB (281 aa).

The 224-residue stretch at 40–263 folds into the ABC transporter domain; the sequence is LDIRGLRKSF…QRGSAELAAL (224 aa). Position 72 to 79 (72 to 79) interacts with ATP; sequence GRSGCGKS.

It belongs to the ABC transporter superfamily. Aliphatic sulfonates importer (TC 3.A.1.17.2) family. As to quaternary structure, the complex is composed of two ATP-binding proteins (SsuB), two transmembrane proteins (SsuC) and a solute-binding protein (SsuA).

The protein localises to the cell inner membrane. It catalyses the reaction ATP + H2O + aliphatic sulfonate-[sulfonate-binding protein]Side 1 = ADP + phosphate + aliphatic sulfonateSide 2 + [sulfonate-binding protein]Side 1.. Its function is as follows. Part of the ABC transporter complex SsuABC involved in aliphatic sulfonates import. Responsible for energy coupling to the transport system. This Rhodopseudomonas palustris (strain ATCC BAA-98 / CGA009) protein is Aliphatic sulfonates import ATP-binding protein SsuB.